The following is a 1679-amino-acid chain: MEDKISEFLNVPFESLQGVTYPVLRKLYKKIAKFERSEEEVTKLNVLVDEIKSQYYSRISKLKQLLDESSEQKNTAKEELNGLKDQLNEERSRYRREIDALKKQLHVSHEAMREVNDEKRVKEEYDIWQSRDQGNDSLNDDLNKENKLLRRKLMEMENILQRCKSNAISLQLKYDTSVQEKELMLQSKKLIEEKLSSFSKKTLTEEVTKSSHVENLEEKLYQMQSNYESVFTYNKFLLNQNKQLSQSVEEKVLEMKNLKDTASVEKAEFSKEMTLQKNMNDLLRSQLTSLEKDCSLRAIEKNDDNSCRNPEHTDVIDELIDTKLRLEKSKNECQRLQNIVMDCTKEEEATMTTSAVSPTVGKLFSDIKVLKRQLIKERNQKFQLQNQLEDFILELEHKTPELISFKERTKSLEHELKRSTELLETVSLTKRKQEREITSLRQKINGCEANIHSLVKQRLDLARQVKLLLLNTSAIQETASPLSQDELISLRKILESSNIVNENDSQAIITERLVEFSNVNELQEKNVELLNCIRILADKLENYEGKQDKTLQKVENQTIKEAKDAIIELENINAKMETRINILLRERDSYKLLASTEENKANTNSVTSMEAAREKKIRELEAELSSTKVENSAIIQNLRKELLIYKKSQCKKKTTLEDFENFKGLAKEKERMLEEAIDHLKAELEKQKSWVPSYIHVEKERASTELSQSRIKIKSLEYEISKLKKETASFIPTKESLTRDFEQCCKEKKELQMRLKESEISHNENKMDFSSKEGQYKAKIKELENNLERLRSDLQSKIQEIESIRSCKDSQLKWAQNTIDDTEMKMKSLLTELSNKETTIEKLSSEIENLDKELRKTKFQYKFLDQNSDASTLEPTLRKELEQIQVQLKDANSQIQAYEEIISSNENALIELKNELAKTKENYDAKIELEKKEKWAREEDLSRLRGELGEIRALQPKLKEGALHFVQQSEKLRNEVERIQKMIEKIEKMSTIVQLCKKKEMSQYQSTMKENKDLSELVIRLEKDAADCQAELTKTKSSLYSAQDLLDKHERKWMEEKADYERELISNIEQTESLRVENSVLIEKVDDTAANNGDKDHLKLVSLFSNLRHERNSLETKLTTCKRELAFVKQKNDSLEKTINDLQRTQTLSEKEYQCSAVIIDEFKDITKEVTQVNILKENNAILQKSLKNVTEKNREIYKQLNDRQEEISRLQRDLIQTKEQVSINSNKILVYESEMEQCKQRYQDLSQQQKDAQKKDIEKLTNEISDLKGKLSSAENANADLENKFNRLKKQAHEKLDASKKQQAALTNELNELKAIKDKLEQDLHFENAKVIDLDTKLKAHELQSEDVSRDHEKDTYRTLMEEIESLKKELQIFKTANSSSDAFEKLKVNMEKEKDRIIDERTKEFEKKLQETLNKSTSSEAEYSKDIETLKKEWLKEYEDETLRRIKEAEENLKKRIRLPSEERIQKIISKRKEELEEEFRKKLKENAGSLTFLDNKGSGEDAEEELWNSPSKGNSERPSAVAGFINQKNLKPQEQLKNVKNDVSFNDSQSMVTNKENNIVDSSAAGNKAIPTFSFGKPFFSSNTSSLQSFQNPFTASQSNINTNAPLRTLNIQPEVAVKAAINFSNVTDLTNNSTDGAKITEIGSTSKRPIESGTSSDPDTKKVKESPANDQASNE.

Coiled-coil stretches lie at residues A32 to T176, Y233 to K466, F516 to L1064, and K1099 to G1491. Short sequence motifs (bipartite nuclear localization signal) lie at residues K417–Q433, R639–T655, and K1433–K1449. Disordered stretches follow at residues F1495–P1521 and D1632–E1679. 2 stretches are compositionally biased toward polar residues: residues N1511 to R1520 and I1646 to D1661. At S1512 the chain carries Phosphoserine. The segment covering P1662–P1671 has biased composition (basic and acidic residues). S1670 carries the post-translational modification Phosphoserine.

As to quaternary structure, component of the nuclear complex (NPC). NPC constitutes the exclusive means of nucleocytoplasmic transport. NPCs allow the passive diffusion of ions and small molecules and the active, nuclear transport receptor-mediated bidirectional transport of macromolecules such as proteins, RNAs, ribonucleoparticles (RNPs), and ribosomal subunits across the nuclear envelope. Due to its 8-fold rotational symmetry, all subunits are present with 8 copies or multiples thereof. Interacts with NUP60 and NIC96, which tether it to the nuclear pore complex. Component of the spindle pole body core in which it interacts directly with SPC110, SPC42 and SPC29. Also interacts with YKU70 (HDF1) and MLP1.

Its subcellular location is the nucleus. The protein localises to the cytoplasm. It localises to the cytoskeleton. It is found in the microtubule organizing center. The protein resides in the spindle pole body. Its subcellular location is the nuclear pore complex. Its function is as follows. Together with the closely related MLP1, involved in the structural and functional organization of perinuclear chromatin. MLP1/MLP2 associate with the nuclear pore complex and form filamentous structures along the nuclear periphery. Has a role in the localization of Esc1 to nucleolar regions. Together with MLP1, mediates tethering of the some telomeres to the nuclear periphery, probably mediated by YKU70/YKU80 (HDF1/HDF2) heterodimer and show perinuclear location dependent silencing. MLP1 and MLP2 are involved in telomere length regulation but not silencing or telomere anchoring. Plays a role in the incorporation of components into the spindle pole body. Involved in double-strand break repair, probably also mediated by the YKU70/YKU80 (HDF1/HDF2) heterodimer. The polypeptide is Protein MLP2 (MLP2) (Saccharomyces cerevisiae (strain ATCC 204508 / S288c) (Baker's yeast)).